Reading from the N-terminus, the 474-residue chain is Cysteine--tRNA ligase (474 aa).

Position 30 (C30) interacts with Zn(2+). The 'HIGH' region motif lies at 32 to 42; the sequence is PTVYNFAHIGN. 3 residues coordinate Zn(2+): C212, H237, and E241. Positions 270–274 match the 'KMSKS' region motif; the sequence is KMSKS. K273 serves as a coordination point for ATP.

Belongs to the class-I aminoacyl-tRNA synthetase family. In terms of assembly, monomer. Zn(2+) serves as cofactor.

The protein resides in the cytoplasm. It catalyses the reaction tRNA(Cys) + L-cysteine + ATP = L-cysteinyl-tRNA(Cys) + AMP + diphosphate. In Leptospira borgpetersenii serovar Hardjo-bovis (strain JB197), this protein is Cysteine--tRNA ligase.